Consider the following 139-residue polypeptide: Large ribosomal subunit protein bL17 (139 aa).

The protein belongs to the bacterial ribosomal protein bL17 family. In terms of assembly, part of the 50S ribosomal subunit. Contacts protein L32.

The protein is Large ribosomal subunit protein bL17 of Cereibacter sphaeroides (strain ATCC 17029 / ATH 2.4.9) (Rhodobacter sphaeroides).